A 447-amino-acid polypeptide reads, in one-letter code: C4-dicarboxylate transport protein (447 aa).

The next 8 helical transmembrane spans lie at 19-39, 55-75, 90-110, 155-175, 199-219, 232-252, 343-363, and 366-386; these read ILYV…HFYP, LVKM…IAGL, IYFL…ANVV, AFAS…GIAL, LVAI…AFTI, MLVG…LGLV, LLLV…AGFI, and AATL…ILGV.

It belongs to the dicarboxylate/amino acid:cation symporter (DAACS) (TC 2.A.23) family.

It localises to the cell inner membrane. Functionally, responsible for the transport of dicarboxylates such as succinate, fumarate, and malate from the periplasm across the membrane. This chain is C4-dicarboxylate transport protein, found in Rhodospirillum rubrum (strain ATCC 11170 / ATH 1.1.1 / DSM 467 / LMG 4362 / NCIMB 8255 / S1).